The following is a 310-amino-acid chain: tRNA uridine(34) hydroxylase (310 aa).

Residues 127–225 (KDKDTIVIDT…YLEDISKEES (99 aa)) form the Rhodanese domain. Residue C185 is the Cysteine persulfide intermediate of the active site.

It belongs to the TrhO family.

It catalyses the reaction uridine(34) in tRNA + AH2 + O2 = 5-hydroxyuridine(34) in tRNA + A + H2O. Its function is as follows. Catalyzes oxygen-dependent 5-hydroxyuridine (ho5U) modification at position 34 in tRNAs. The sequence is that of tRNA uridine(34) hydroxylase from Prochlorococcus marinus (strain MIT 9515).